Here is a 337-residue protein sequence, read N- to C-terminus: Glyceraldehyde-3-phosphate dehydrogenase (337 aa).

Residues 17 to 18 (RI), D39, K83, and S125 each bind NAD(+). Residues 156 to 158 (SCT), T187, R202, 215 to 216 (TG), and R238 contribute to the D-glyceraldehyde 3-phosphate site. C157 (nucleophile) is an active-site residue. N319 is a binding site for NAD(+).

Belongs to the glyceraldehyde-3-phosphate dehydrogenase family. As to quaternary structure, homotetramer.

Its subcellular location is the cytoplasm. The catalysed reaction is D-glyceraldehyde 3-phosphate + phosphate + NAD(+) = (2R)-3-phospho-glyceroyl phosphate + NADH + H(+). It functions in the pathway carbohydrate degradation; glycolysis; pyruvate from D-glyceraldehyde 3-phosphate: step 1/5. Functionally, catalyzes the oxidative phosphorylation of glyceraldehyde 3-phosphate (G3P) to 1,3-bisphosphoglycerate (BPG) using the cofactor NAD. The first reaction step involves the formation of a hemiacetal intermediate between G3P and a cysteine residue, and this hemiacetal intermediate is then oxidized to a thioester, with concomitant reduction of NAD to NADH. The reduced NADH is then exchanged with the second NAD, and the thioester is attacked by a nucleophilic inorganic phosphate to produce BPG. The chain is Glyceraldehyde-3-phosphate dehydrogenase (gapA) from Mycoplasma pneumoniae (strain ATCC 29342 / M129 / Subtype 1) (Mycoplasmoides pneumoniae).